The chain runs to 971 residues: Endoplasmic reticulum calcium ATPase srcA (971 aa).

Over 1–25 (MNNEALAEDPPTPLWELVLEQFKDQ) the chain is Cytoplasmic. Residues 26 to 46 (LVLILLGSAAVSFVLALFEEG) traverse the membrane as a helical segment. The Lumenal portion of the chain corresponds to 47 to 49 (DDW). A helical transmembrane segment spans residues 50 to 70 (TAFVDPVVILTILILNAVVGV). The Cytoplasmic portion of the chain corresponds to 71 to 217 (TQESSAEKAI…PTPLKQKLND (147 aa)). A helical membrane pass occupies residues 218–238 (FGDMLAKVITVICVLVWLINV). Residues 239 to 262 (EHFNDPAHGGWAKGAIYYLKIAVS) lie on the Lumenal side of the membrane. A helical transmembrane segment spans residues 263–283 (LGVAAIPEGLAVVITTCLALG). Positions 265, 266, 268, and 270 each coordinate Ca(2+). The Cytoplasmic segment spans residues 284–718 (TRKMAAKNAV…GRSIYSNTQQ (435 aa)). Catalysis depends on aspartate 312, which acts as the 4-aspartylphosphate intermediate. Mg(2+) is bound by residues aspartate 312 and threonine 314. Residues threonine 314, glutamate 402, arginine 453, lysine 473, arginine 518, arginine 637, and lysine 643 each coordinate ATP. Aspartate 662 provides a ligand contact to Mg(2+). Asparagine 665 contacts ATP. The chain crosses the membrane as a helical span at residues 719–741 (FIRYLISSNIGEVVSIFLTAALG). Residues asparagine 727 and glutamate 730 each contribute to the Ca(2+) site. Residues 742-750 (MPEALIPVQ) lie on the Lumenal side of the membrane. Residues 751-770 (LLWVNLVTDGLPATALSFNP) traverse the membrane as a helical segment. Ca(2+)-binding residues include asparagine 755, threonine 758, and aspartate 759. Residues 771–795 (PDHDVMRRAPRKRDEPLVGGWLLFR) lie on the Cytoplasmic side of the membrane. Residues 796–816 (YLAIGTYVGAATVFGYIWWFV) form a helical membrane-spanning segment. The Lumenal portion of the chain corresponds to 817–854 (YNPEGPQISFWQLSHFHKCSAQFPEIGCEMFSNEMSRS). The chain crosses the membrane as a helical span at residues 855–875 (ASTVSLSILVVIEMLNAMNAL). Glutamate 867 provides a ligand contact to Ca(2+). Topologically, residues 876–891 (SSSESLLAFPLWNNMM) are cytoplasmic. The helical transmembrane segment at 892 to 912 (LVYAIILSMTLHFAILYIPFL) threads the bilayer. The Lumenal portion of the chain corresponds to 913–917 (QTLFS). Residues 918-938 (ILPLNWTEWKAVLAISAPVVA) form a helical membrane-spanning segment. The Cytoplasmic segment spans residues 939–971 (IDELLKYAERRLYTLPAIAGEQQNGVAFKPKKA).

The protein belongs to the cation transport ATPase (P-type) (TC 3.A.3) family. Requires Mg(2+) as cofactor.

It is found in the endoplasmic reticulum membrane. It catalyses the reaction Ca(2+)(in) + ATP + H2O = Ca(2+)(out) + ADP + phosphate + H(+). In terms of biological role, magnesium-dependent enzyme catalyzes the hydrolysis of ATP coupled with the translocation of calcium from the cytosol to the endoplasmic reticulum lumen. Its activity is coupled to the unfolded protein response (UPR) and Ca(2+) import into the endoplasmioc reticulum is important for redox homeostasis, virulence, cell wall biosynthesis, and resistance to antifungal compounds that inhibit Ca2+ signaling. With pmrA, promotes radial growth and conidiation. This Aspergillus fumigatus (strain ATCC MYA-4609 / CBS 101355 / FGSC A1100 / Af293) (Neosartorya fumigata) protein is Endoplasmic reticulum calcium ATPase srcA (srcA).